A 72-amino-acid chain; its full sequence is MIIPWQEIAPDTLERLIEAFVLREGTDYGEHERSLEQKVADVRRQLQSGEAVLVWSELHETVNIMPRSQFRG.

Belongs to the UPF0270 family.

This chain is UPF0270 protein ESA_04379, found in Cronobacter sakazakii (strain ATCC BAA-894) (Enterobacter sakazakii).